A 198-amino-acid chain; its full sequence is Ribose 1,5-bisphosphate phosphokinase PhnN (198 aa).

25–32 provides a ligand contact to ATP; it reads GPSGAGKD.

The protein belongs to the ribose 1,5-bisphosphokinase family.

It catalyses the reaction alpha-D-ribose 1,5-bisphosphate + ATP = 5-phospho-alpha-D-ribose 1-diphosphate + ADP. The protein operates within metabolic intermediate biosynthesis; 5-phospho-alpha-D-ribose 1-diphosphate biosynthesis; 5-phospho-alpha-D-ribose 1-diphosphate from D-ribose 5-phosphate (route II): step 3/3. Catalyzes the phosphorylation of ribose 1,5-bisphosphate to 5-phospho-D-ribosyl alpha-1-diphosphate (PRPP). In Bradyrhizobium diazoefficiens (strain JCM 10833 / BCRC 13528 / IAM 13628 / NBRC 14792 / USDA 110), this protein is Ribose 1,5-bisphosphate phosphokinase PhnN.